Here is a 245-residue protein sequence, read N- to C-terminus: Ribosomal RNA large subunit methyltransferase E (245 aa).

The tract at residues 1 to 26 is disordered; that stretch reads MTKPPVGSNRSGRKLGQKVKKGKLKA. The segment covering 11 to 26 has biased composition (basic residues); sequence SGRKLGQKVKKGKLKA. Residues G81, W83, D104, D120, and D144 each coordinate S-adenosyl-L-methionine. K184 (proton acceptor) is an active-site residue.

Belongs to the class I-like SAM-binding methyltransferase superfamily. RNA methyltransferase RlmE family.

The protein resides in the cytoplasm. The enzyme catalyses uridine(2552) in 23S rRNA + S-adenosyl-L-methionine = 2'-O-methyluridine(2552) in 23S rRNA + S-adenosyl-L-homocysteine + H(+). Its function is as follows. Specifically methylates the uridine in position 2552 of 23S rRNA at the 2'-O position of the ribose in the fully assembled 50S ribosomal subunit. This Sinorhizobium medicae (strain WSM419) (Ensifer medicae) protein is Ribosomal RNA large subunit methyltransferase E.